Reading from the N-terminus, the 204-residue chain is Protein GrpE (204 aa).

The segment at 1 to 42 (MTDETAKNGPDAAADAQIEPQVQEETNSTAEDAGQDNNPTAA) is disordered. The span at 23-41 (QEETNSTAEDAGQDNNPTA) shows a compositional bias: polar residues.

This sequence belongs to the GrpE family. Homodimer.

The protein localises to the cytoplasm. Participates actively in the response to hyperosmotic and heat shock by preventing the aggregation of stress-denatured proteins, in association with DnaK and GrpE. It is the nucleotide exchange factor for DnaK and may function as a thermosensor. Unfolded proteins bind initially to DnaJ; upon interaction with the DnaJ-bound protein, DnaK hydrolyzes its bound ATP, resulting in the formation of a stable complex. GrpE releases ADP from DnaK; ATP binding to DnaK triggers the release of the substrate protein, thus completing the reaction cycle. Several rounds of ATP-dependent interactions between DnaJ, DnaK and GrpE are required for fully efficient folding. This chain is Protein GrpE, found in Allorhizobium ampelinum (strain ATCC BAA-846 / DSM 112012 / S4) (Agrobacterium vitis (strain S4)).